Reading from the N-terminus, the 314-residue chain is Olfactory receptor 5B12 (314 aa).

Residues 1 to 23 (MENNTEVTEFILVGLTDDPELQI) are Extracellular-facing. N-linked (GlcNAc...) asparagine glycosylation is present at N3. A helical membrane pass occupies residues 24–44 (PLFIVFLFIYLITLVGNLGMI). At 45–52 (ELILLDSC) the chain is on the cytoplasmic side. The chain crosses the membrane as a helical span at residues 53–73 (LHTPMYFFLSNLSLVDFGYSS). Topologically, residues 74–97 (AVTPKVMVGFLTGDKFILYNACAT) are extracellular. A disulfide bond links C95 and C187. The chain crosses the membrane as a helical span at residues 98–118 (QFFFFVAFITAESFLLASMAY). Residues 119–137 (DRYAALCKPLHYTTTMTTN) lie on the Cytoplasmic side of the membrane. A helical membrane pass occupies residues 138-158 (VCACLAIGSYICGFLNASIHT). Over 159 to 194 (GNTFRLSFCRSNVVEHFFCDAPPLLTLSCSDNYISE) the chain is Extracellular. A helical transmembrane segment spans residues 195-215 (MVIFFVVGFNDLFSILVILIS). The Cytoplasmic segment spans residues 216-235 (YLFIFITIMKMRSPEGRQKA). The chain crosses the membrane as a helical span at residues 236 to 256 (FSTCASHLTAVSIFYGTGIFM). Topologically, residues 257 to 269 (YLRPNSSHFMGTD) are extracellular. The N-linked (GlcNAc...) asparagine glycan is linked to N261. Residues 270 to 290 (KMASVFYAIVIPMLNPLVYSL) traverse the membrane as a helical segment. At 291 to 314 (RNKEVKSAFKKTVGKAKASIGFIF) the chain is on the cytoplasmic side.

Belongs to the G-protein coupled receptor 1 family.

It is found in the cell membrane. Functionally, odorant receptor. This chain is Olfactory receptor 5B12 (OR5B12), found in Homo sapiens (Human).